The primary structure comprises 711 residues: MLKKKAKTKSSSKKWSSFKNARSMHVLLYLLLAAIMFALLFVHVKPETLDLDLFSVSDKTIYAPATVEDQKATEEKKQAAEDAVEDQYTLKKEYTDNRIDLVSSIFDSISEVKKSSEEGSKSPSEKSMVKSVKDKLTSDVNDSISEDSIKTLLKADSEDFSFVRDTVITAVNTVMSSEIPSDKLSDAKDKVEKELKSNSIPSKYLGAATEIGRFAIIPNYVFDPKATEAKRQEASDNVQQVQIKQGQVLVEENDLIDREVYRKLELTGLLNNSNLFKPISGLLIMIGLFIATLVYYFEKQKQNLKFKNQSILLFSIITTLLLVIMEVVSLFQKMEYNNIGYLVPIAAGAILIKLLMNERIAILGSIILAICGSMMFNQGVTGTFNYVIGIYYLISGISGVLFLGKHNARSKILQTGLFVAFINMVVVLSLLLIQNTALSGLEIGTLMLMGVVSGFASSVLIIGLMPFFETGFGILSTMRLLELSNPNHPLLRKILTETPGTYHHSVMVANLSEAACEAVGANGLLARVGAYYHDLGKTKRPQYFIENQMNIDNPHDKLSPQLSKNIIISHTTDGANMLRSYKFPKELVDIAEQHHGTSLLKFFYYKAKEKGDQITEEEFRYPGPKPQSKEAAIISVADSVEAAVRSMHNPNPERIEKLVRGIISDKLQDGQFSECDLTFKELDTIAKTLCATLKGIFHSRIEYPEATKKVK.

Positions 114–133 are disordered; sequence KSSEEGSKSPSEKSMVKSVK. A run of 7 helical transmembrane segments spans residues 275-295, 311-331, 336-356, 360-380, 384-404, 413-433, and 448-468; these read LFKP…TLVY, ILLF…VSLF, YNNI…KLLM, IAIL…NQGV, FNYV…LFLG, LQTG…LLLI, and LMGV…MPFF. The 143-residue stretch at 501 to 643 folds into the HD domain; it reads TYHHSVMVAN…ISVADSVEAA (143 aa). Histidine 504, histidine 533, aspartate 534, histidine 570, histidine 594, and histidine 595 together coordinate Mn(2+). Position 504 (histidine 504) interacts with substrate. 2 residues coordinate substrate: tyrosine 621 and aspartate 638. Aspartate 638 serves as a coordination point for Mn(2+).

This sequence belongs to the PgpH phosphodiesterase family. Mn(2+) serves as cofactor.

It is found in the cell membrane. It catalyses the reaction 3',3'-c-di-AMP + H2O = 5'-O-phosphonoadenylyl-(3'-&gt;5')-adenosine + H(+). Its function is as follows. Probably has phosphodiesterase (PDE) activity against cyclic-di-AMP (c-di-AMP); may be the major c-di-AMP PDE in the cell. In B.subtilis c-di-AMP is a second messenger that mediates growth, DNA repair and cell wall homeostasis; it is toxic when present in excess. In Bacillus subtilis (strain 168), this protein is Cyclic-di-AMP phosphodiesterase PgpH.